We begin with the raw amino-acid sequence, 165 residues long: Myosin regulatory light chain 2, ventricular/cardiac muscle isoform (165 aa).

Ser2 carries the post-translational modification N,N,N-trimethylserine. Asn14 carries the post-translational modification Deamidated asparagine. Residues Ser15 and Ser19 each carry the phosphoserine modification. EF-hand domains lie at 24 to 59 (TQIQEFKEAFTIMDQNRDGFIDKNDLRDTFAALGRV), 94 to 129 (DPEETILNAFKVFDPEGKGVLKADYVREMLTTQAER), and 130 to 165 (FSKDEIDQMFAAFPPDVTGNLDYKNLVHIITHGEEK). Ca(2+) contacts are provided by Asp37, Asn39, Asp41, and Asp48. Phosphothreonine is present on Thr52.

As to quaternary structure, myosin is a hexamer of 2 heavy chains and 4 light chains. Interacts with MYOC. In terms of processing, N-terminus is methylated by METTL11A/NTM1. Post-translationally, phosphorylated by MYLK3 and MYLK2; promotes cardiac muscle contraction and function. Dephosphorylated by PPP1CB complexed to PPP1R12B. The phosphorylated form in adult is expressed as gradients across the heart from endocardium (low phosphorylation) to epicardium (high phosphorylation); regulates cardiac torsion and workload distribution.

The protein resides in the cytoplasm. It is found in the myofibril. The protein localises to the sarcomere. It localises to the a band. Functionally, contractile protein that plays a role in heart development and function. Following phosphorylation, plays a role in cross-bridge cycling kinetics and cardiac muscle contraction by increasing myosin lever arm stiffness and promoting myosin head diffusion; as a consequence of the increase in maximum contraction force and calcium sensitivity of contraction force. These events altogether slow down myosin kinetics and prolong duty cycle resulting in accumulated myosins being cooperatively recruited to actin binding sites to sustain thin filament activation as a means to fine-tune myofilament calcium sensitivity to force. During cardiogenesis plays an early role in cardiac contractility by promoting cardiac myofibril assembly. This chain is Myosin regulatory light chain 2, ventricular/cardiac muscle isoform, found in Oryctolagus cuniculus (Rabbit).